The chain runs to 158 residues: RNA pyrophosphohydrolase (158 aa).

The Nudix hydrolase domain occupies 6–149; the sequence is GYRLNVGIVL…KRHVYRKVMK (144 aa). The short motif at 38–59 is the Nudix box element; it reads GGINIGETPEQAMYRELFEEIG.

This sequence belongs to the Nudix hydrolase family. RppH subfamily. The cofactor is a divalent metal cation.

Its function is as follows. Accelerates the degradation of transcripts by removing pyrophosphate from the 5'-end of triphosphorylated RNA, leading to a more labile monophosphorylated state that can stimulate subsequent ribonuclease cleavage. The protein is RNA pyrophosphohydrolase of Blochmanniella floridana.